A 251-amino-acid polypeptide reads, in one-letter code: MIFKKEVSKEDVECVETLLMMSNSKPTREEYNKLQLCILRRNKSSTITTPSTVMESKSHIHDHSLRESPTRRSRNRHDLPPMSPPMEQRKSKKAKRSTDASSSKTREPTPGWLISLMRSKNGGDVEDNSKKIIDKELFQTDVDPHQSRLSIPVSQIVELEFLNHEEKRAIEEDANRVRKEGVDAILVDSHLREFPVNLRLRDMRGILLYNLVAGWNQVVTDCLLEENTNIRLWSFHADDTLYFALVPLYAN.

Residues 48 to 111 are disordered; sequence TTPSTVMESK…SSKTREPTPG (64 aa). Positions 56–70 are enriched in basic and acidic residues; sequence SKSHIHDHSLRESPT. Residues 153–249 constitute a DNA-binding region (TF-B3); that stretch reads VSQIVELEFL…TLYFALVPLY (97 aa).

Its subcellular location is the nucleus. The protein is B3 domain-containing protein At2g24670 of Arabidopsis thaliana (Mouse-ear cress).